Here is a 309-residue protein sequence, read N- to C-terminus: MPLTHIRLLLNGKKATNVDIRQSVIALREQGHTIDVRVSWESADMLRFITEAIADNVGRVVIGGGDGSLNEAVNALMQQPQQDHKLEIAVLPLGTANDFATACGISNIIQSTLELAIHGDSYPIDIIRANNNYFINAAVAGFGAQVTAETPTELKDFLGGGAYTLVGLAKALGFKPYQGSITTDKGTFNGDIVVGAICNNKQAGGGQMLAPNALIDDGLMDITLLKSFSTFDIPVVLDEIQAMSHEAKFCYHFQTRWLEIDFPIKLPLNLDGEPYPTKKMRFEVLPKAIQFVLPPNCPCLVQSTQKSGI.

Residues 1 to 133 enclose the DAGKc domain; it reads MPLTHIRLLL…IDIIRANNNY (133 aa). ATP contacts are provided by residues S39, 65 to 71, and T95; that span reads GDGSLNE. The Mg(2+) site is built by L214, D217, and L219. The active-site Proton acceptor is the E273.

The protein belongs to the diacylglycerol/lipid kinase family. YegS lipid kinase subfamily. The cofactor is Mg(2+). Ca(2+) is required as a cofactor.

The protein localises to the cytoplasm. Functionally, probably phosphorylates lipids; the in vivo substrate is unknown. This is Probable lipid kinase YegS-like from Shewanella frigidimarina (strain NCIMB 400).